We begin with the raw amino-acid sequence, 557 residues long: ABC1 family protein MCP2 homolog (557 aa).

The transit peptide at 1–33 (MFSRFSWPRITRCFRSYPKKKSSCISFTHHARE) directs the protein to the mitochondrion. The Mitochondrial matrix segment spans residues 34–39 (HTNFKK). The chain crosses the membrane as a helical span at residues 40-56 (PAVVGASITLMASVALV). Over 57–557 (DFDPVKHAGV…NYFYYKHMYL (501 aa)) the chain is Mitochondrial intermembrane.

It belongs to the protein kinase superfamily. ADCK protein kinase family.

The protein localises to the mitochondrion inner membrane. Functionally, involved in mitochondrial lipid homeostasis. In Schizosaccharomyces pombe (strain 972 / ATCC 24843) (Fission yeast), this protein is ABC1 family protein MCP2 homolog.